The sequence spans 612 residues: BTB/POZ domain-containing protein 9 (612 aa).

The BTB domain occupies glycine 36–aspartate 104. In terms of domain architecture, BACK spans valine 142–arginine 240. The segment at glutamine 559–glutamine 612 is disordered. Over residues arginine 589–glutamine 612 the composition is skewed to low complexity.

In terms of tissue distribution, detected throughout the gray matter of the spinal cord including the motor neurons (at protein level). In the brain, detected in the neurons of the hippocampus and in the Purkinje cells of the cerebellum (at protein level). Also detected in the terospenial cortex, bed nucleus of the stria terminalis (BST) and the ventrolateral thalamus (VL) (at protein level).

The sequence is that of BTB/POZ domain-containing protein 9 (Btbd9) from Rattus norvegicus (Rat).